The following is a 388-amino-acid chain: Succinate--CoA ligase [ADP-forming] subunit beta (388 aa).

The ATP-grasp domain occupies Lys9 to Gln244. Residues Lys46, Gly53–Gly55, Glu99, Thr102, and Glu107 contribute to the ATP site. Residues Asn199 and Asp213 each contribute to the Mg(2+) site. Substrate is bound by residues Asn264 and Gly321–Val323.

It belongs to the succinate/malate CoA ligase beta subunit family. In terms of assembly, heterotetramer of two alpha and two beta subunits. The cofactor is Mg(2+).

The enzyme catalyses succinate + ATP + CoA = succinyl-CoA + ADP + phosphate. The catalysed reaction is GTP + succinate + CoA = succinyl-CoA + GDP + phosphate. Its pathway is carbohydrate metabolism; tricarboxylic acid cycle; succinate from succinyl-CoA (ligase route): step 1/1. Succinyl-CoA synthetase functions in the citric acid cycle (TCA), coupling the hydrolysis of succinyl-CoA to the synthesis of either ATP or GTP and thus represents the only step of substrate-level phosphorylation in the TCA. The beta subunit provides nucleotide specificity of the enzyme and binds the substrate succinate, while the binding sites for coenzyme A and phosphate are found in the alpha subunit. The sequence is that of Succinate--CoA ligase [ADP-forming] subunit beta from Yersinia enterocolitica serotype O:8 / biotype 1B (strain NCTC 13174 / 8081).